The following is a 326-amino-acid chain: Malate dehydrogenase (326 aa).

12–18 is a binding site for NAD(+); it reads GGTGQIA. Residues arginine 93 and arginine 99 each contribute to the substrate site. NAD(+) is bound by residues asparagine 106, glutamine 113, and 130 to 132; that span reads VGN. Positions 132 and 163 each coordinate substrate. The active-site Proton acceptor is the histidine 188.

This sequence belongs to the LDH/MDH superfamily. MDH type 2 family.

The catalysed reaction is (S)-malate + NAD(+) = oxaloacetate + NADH + H(+). Its function is as follows. Catalyzes the reversible oxidation of malate to oxaloacetate. The sequence is that of Malate dehydrogenase from Chlamydia trachomatis serovar A (strain ATCC VR-571B / DSM 19440 / HAR-13).